The following is a 537-amino-acid chain: Bifunctional purine biosynthesis protein PurH (537 aa).

Residues 8-158 enclose the MGS-like domain; that stretch reads IPAPDLVPVR…KNHAYVAVVT (151 aa).

Belongs to the PurH family.

It catalyses the reaction (6R)-10-formyltetrahydrofolate + 5-amino-1-(5-phospho-beta-D-ribosyl)imidazole-4-carboxamide = 5-formamido-1-(5-phospho-D-ribosyl)imidazole-4-carboxamide + (6S)-5,6,7,8-tetrahydrofolate. The catalysed reaction is IMP + H2O = 5-formamido-1-(5-phospho-D-ribosyl)imidazole-4-carboxamide. Its pathway is purine metabolism; IMP biosynthesis via de novo pathway; 5-formamido-1-(5-phospho-D-ribosyl)imidazole-4-carboxamide from 5-amino-1-(5-phospho-D-ribosyl)imidazole-4-carboxamide (10-formyl THF route): step 1/1. The protein operates within purine metabolism; IMP biosynthesis via de novo pathway; IMP from 5-formamido-1-(5-phospho-D-ribosyl)imidazole-4-carboxamide: step 1/1. The sequence is that of Bifunctional purine biosynthesis protein PurH from Chelativorans sp. (strain BNC1).